We begin with the raw amino-acid sequence, 982 residues long: Mineralocorticoid receptor (982 aa).

The interval 1-601 is modulating; that stretch reads METKGYHSLP…STGSSRPSKI (601 aa). Over residues 230 to 242 the composition is skewed to polar residues; it reads QGTPLTCSPNVEN. Disordered stretches follow at residues 230–328 and 345–375; these read QGTP…AAST and SGTS…PFPK. 5 positions are modified to phosphoserine: serine 249, serine 258, serine 282, serine 286, and serine 298. Positions 258–299 are enriched in low complexity; it reads SPLSSPLSSMKSSISSPPSHCSVKSPVSSPNNVTPRSSVSSP. The segment covering 300-328 has biased composition (polar residues); that stretch reads ANINNSRCSVSSPSNTNNRSTLSSPAAST. Over residues 345 to 354 the composition is skewed to low complexity; the sequence is SGTSAGSSTS. Zn(2+) contacts are provided by cysteine 602, cysteine 605, cysteine 619, cysteine 622, cysteine 638, cysteine 644, cysteine 654, and cysteine 657. 2 NR C4-type zinc fingers span residues 602 to 622 and 638 to 662; these read CLVC…CGSC and CAGR…LQKC. Residues 602-667 constitute a DNA-binding region (nuclear receptor); that stretch reads CLVCGDEASG…RLQKCLQAGM (66 aa). The interval 668–723 is hinge; that stretch reads NLGARRSKKLGKLKGIHEEQPQQQPPPPPPPPQSPEEGTTYIAPAKEPSVNTALVP. Residues 682–708 form a disordered region; the sequence is GIHEEQPQQQPPPPPPPPQSPEEGTTY. Pro residues predominate over residues 690 to 701; sequence QQPPPPPPPPQS. The NR LBD domain maps to 724–962; sequence QLSAISRALT…EFPAMLVEII (239 aa). 2 residues coordinate 21-hydroxyprogesterone: asparagine 768 and glutamine 774. Positions 768 and 774 each coordinate aldosterone. The progesterone site is built by asparagine 768 and glutamine 774. The important for coactivator binding stretch occupies residues 780 to 783; that stretch reads KWAK. Arginine 815 and threonine 943 together coordinate 21-hydroxyprogesterone. Positions 815 and 943 each coordinate aldosterone. Progesterone contacts are provided by arginine 815 and threonine 943.

This sequence belongs to the nuclear hormone receptor family. NR3 subfamily. Phosphorylated. Expressed in hippocampus, being restricted to the more superficial cortical layers.

The protein localises to the cytoplasm. Its subcellular location is the nucleus. In terms of biological role, receptor for both mineralocorticoids (MC) such as aldosterone and glucocorticoids (GC) such as corticosterone or cortisol. Binds to mineralocorticoid response elements (MRE) and transactivates target genes. The effect of MC is to increase ion and water transport and thus raise extracellular fluid volume and blood pressure and lower potassium levels. The polypeptide is Mineralocorticoid receptor (NR3C2) (Saimiri sciureus (Common squirrel monkey)).